Consider the following 558-residue polypeptide: MRYLITSALPYINGIKHLGNLVGSMLPADIYARFLRQEGEEVLYICATDEHGTPAEIAAIDAGLEVAEFCAKQYHKQKEIYKRFGLSFDYFGRTSAPENHELTQYFYQQLAKQNFIEEREISQFYALDDQRFLPDRYVTGTCPHCGYEQARGDQCENCTKVLTPTELIKPRSTISGSTHLELRTSRHLFLRLDKLSDEVRNWVDKQTQWSTLTKSIALKWLNEGLKSRCITRDLVWGVPVPTEGFERKVFYVWFDAPIGYISATKAWGDITNNDWECWWKESDDVHYTQFMAKDNLPFHTIMWPATILGSREPWKMVDYIKGFNWLNYYGGKFSTSSQRGVFLDQALEIASADNWRYMLIANAPESADSAFTWEQFQKQVNKELADNLGNFVNRILKFTASRFGMTLPEGGTPGDAEAELQVTCNELVEKLRKYLHNLEFRRATETLNALWRTGNQYIDVRAPWVLFKTDQDETAMVIRTCVNLIRLYAISSAPFIPHTTQALFDALQLTDVERRHTMTEASDLTLLAAGRSFMVPAPLFQKIDDDLVAELKAQYGGE.

Residues 10-20 (PYINGIKHLGN) carry the 'HIGH' region motif. Residues C142, C145, C155, and C158 each coordinate Zn(2+). A 'KMSKS' region motif is present at residues 332-336 (KFSTS). An ATP-binding site is contributed by T335.

It belongs to the class-I aminoacyl-tRNA synthetase family. MetG type 1 subfamily. As to quaternary structure, monomer. Requires Zn(2+) as cofactor.

It is found in the cytoplasm. The catalysed reaction is tRNA(Met) + L-methionine + ATP = L-methionyl-tRNA(Met) + AMP + diphosphate. In terms of biological role, is required not only for elongation of protein synthesis but also for the initiation of all mRNA translation through initiator tRNA(fMet) aminoacylation. The chain is Methionine--tRNA ligase 1 from Acaryochloris marina (strain MBIC 11017).